The chain runs to 56 residues: Large ribosomal subunit protein bL32 (56 aa).

The disordered stretch occupies residues 1-29 (MAVQQNKPSRSKRGMRRSHDALTTSSVSV).

Belongs to the bacterial ribosomal protein bL32 family.

This Pectobacterium atrosepticum (strain SCRI 1043 / ATCC BAA-672) (Erwinia carotovora subsp. atroseptica) protein is Large ribosomal subunit protein bL32.